The primary structure comprises 184 residues: MKNVTDSFVSLGHWPFAGSFGFNTDILATNLINLSVVLGVLIFFGKGVLSDLLDNRKQRIWSTIRNSDELREVAIEQLEKARARLRKVEREADEFRVNGYSEIEREKWNLINATYENLERLENYKNETIHFEQQRAINQVRQRVFQQALQGALGTLNSRSNSELHLRTISANIGMLGAMKEITD.

A helical membrane pass occupies residues Ile26 to Val48.

The protein belongs to the ATPase B chain family. As to quaternary structure, F-type ATPases have 2 components, F(1) - the catalytic core - and F(0) - the membrane proton channel. F(1) has five subunits: alpha(3), beta(3), gamma(1), delta(1), epsilon(1). F(0) has four main subunits: a(1), b(1), b'(1) and c(10-14). The alpha and beta chains form an alternating ring which encloses part of the gamma chain. F(1) is attached to F(0) by a central stalk formed by the gamma and epsilon chains, while a peripheral stalk is formed by the delta, b and b' chains.

It localises to the plastid. Its subcellular location is the chloroplast thylakoid membrane. Its function is as follows. F(1)F(0) ATP synthase produces ATP from ADP in the presence of a proton or sodium gradient. F-type ATPases consist of two structural domains, F(1) containing the extramembraneous catalytic core and F(0) containing the membrane proton channel, linked together by a central stalk and a peripheral stalk. During catalysis, ATP synthesis in the catalytic domain of F(1) is coupled via a rotary mechanism of the central stalk subunits to proton translocation. Component of the F(0) channel, it forms part of the peripheral stalk, linking F(1) to F(0). The sequence is that of ATP synthase subunit b, chloroplastic from Calycanthus floridus var. glaucus (Eastern sweetshrub).